Consider the following 445-residue polypeptide: ATP-dependent protease ATPase subunit HslU (445 aa).

Residues V18, 60-65 (GVGKTE), D254, E319, and R391 contribute to the ATP site.

The protein belongs to the ClpX chaperone family. HslU subfamily. As to quaternary structure, a double ring-shaped homohexamer of HslV is capped on each side by a ring-shaped HslU homohexamer. The assembly of the HslU/HslV complex is dependent on binding of ATP.

The protein resides in the cytoplasm. ATPase subunit of a proteasome-like degradation complex; this subunit has chaperone activity. The binding of ATP and its subsequent hydrolysis by HslU are essential for unfolding of protein substrates subsequently hydrolyzed by HslV. HslU recognizes the N-terminal part of its protein substrates and unfolds these before they are guided to HslV for hydrolysis. The chain is ATP-dependent protease ATPase subunit HslU from Alcanivorax borkumensis (strain ATCC 700651 / DSM 11573 / NCIMB 13689 / SK2).